The chain runs to 353 residues: Melanin-concentrating hormone receptor 1 (353 aa).

The tract at residues 1-29 (MDLEASLLPTGPNASNTSDGPDNLTSAGS) is disordered. Residues 1-44 (MDLEASLLPTGPNASNTSDGPDNLTSAGSPPRTGSISYINIIMP) lie on the Extracellular side of the membrane. Positions 12–29 (PNASNTSDGPDNLTSAGS) are enriched in polar residues. 3 N-linked (GlcNAc...) asparagine glycosylation sites follow: asparagine 13, asparagine 16, and asparagine 23. Residues 45–67 (SVFGTICLLGIIGNSTVIFAVVK) traverse the membrane as a helical segment. Residues 68-79 (KSKLHWCNNVPD) are Cytoplasmic-facing. Residues 80-102 (IFIINLSVVDLLFLLGMPFMIHQ) traverse the membrane as a helical segment. At 103–116 (LMGNGVWHFGETMC) the chain is on the extracellular side. Residues cysteine 116 and cysteine 194 are joined by a disulfide bond. The helical transmembrane segment at 117–139 (TLITAMDANSQFTSTYILTAMAI) threads the bilayer. The Cytoplasmic segment spans residues 140–158 (DRYLATVHPISSTKFRKPS). Residues 159 to 181 (VATLVICLLWALSFISITPVWLY) form a helical membrane-spanning segment. Over 182–209 (ARLIPFPGGAVGCGIRLPNPDTDLYWFT) the chain is Extracellular. Residues 210-232 (LYQFFLAFALPFVVITAAYVRIL) form a helical membrane-spanning segment. Residues 233–252 (QRMTSSVAPASQRSIRLRTK) lie on the Cytoplasmic side of the membrane. A helical membrane pass occupies residues 253 to 275 (RVTRTAIAICLVFFVCWAPYYVL). The Extracellular segment spans residues 276–289 (QLTQLSISRPTLTF). The chain crosses the membrane as a helical span at residues 290 to 312 (VYLYNAAISLGYANSCLNPFVYI). At 313–353 (VLCETFRKRLVLSVKPAAQGQLRAVSNAQTADEERTESKGT) the chain is on the cytoplasmic side.

The protein belongs to the G-protein coupled receptor 1 family. Interacts with NCDN. In terms of tissue distribution, highest level in brain, particularly in the frontal cortex and hypothalamus, lower levels in the liver and heart.

Its subcellular location is the cell membrane. Functionally, receptor for melanin-concentrating hormone, coupled to both G proteins that inhibit adenylyl cyclase and G proteins that activate phosphoinositide hydrolysis. The polypeptide is Melanin-concentrating hormone receptor 1 (Homo sapiens (Human)).